A 335-amino-acid polypeptide reads, in one-letter code: Glycerol-3-phosphate dehydrogenase [NAD(P)+] (335 aa).

NADPH contacts are provided by Ser-15, Tyr-16, His-36, and Lys-110. Lys-110, Gly-139, and Thr-141 together coordinate sn-glycerol 3-phosphate. NADPH is bound at residue Ala-143. Lys-195, Asp-248, Ser-258, Arg-259, and Asn-260 together coordinate sn-glycerol 3-phosphate. Lys-195 serves as the catalytic Proton acceptor. Arg-259 serves as a coordination point for NADPH. 2 residues coordinate NADPH: Val-283 and Glu-285.

Belongs to the NAD-dependent glycerol-3-phosphate dehydrogenase family.

It localises to the cytoplasm. It catalyses the reaction sn-glycerol 3-phosphate + NAD(+) = dihydroxyacetone phosphate + NADH + H(+). The catalysed reaction is sn-glycerol 3-phosphate + NADP(+) = dihydroxyacetone phosphate + NADPH + H(+). Its pathway is membrane lipid metabolism; glycerophospholipid metabolism. In terms of biological role, catalyzes the reduction of the glycolytic intermediate dihydroxyacetone phosphate (DHAP) to sn-glycerol 3-phosphate (G3P), the key precursor for phospholipid synthesis. The sequence is that of Glycerol-3-phosphate dehydrogenase [NAD(P)+] from Haemophilus influenzae (strain ATCC 51907 / DSM 11121 / KW20 / Rd).